Consider the following 914-residue polypeptide: DENN domain-containing protein 2C (914 aa).

The disordered stretch occupies residues 46–98 (FGVRYNCHQESPPHKRPTGEERNGALPRNTDVKSRDQSEDEGEGGECRGSHPS). The span at 56 to 68 (SPPHKRPTGEERN) shows a compositional bias: basic and acidic residues. Residue Ser-261 is modified to Phosphoserine. Positions 411 to 446 (GKKRVKLQPYTGKEAPSSKGETSGNESDAEYLPKNR) are disordered. The uDENN domain occupies 480–627 (ELFVVVSLQK…PFPAPGRTIT (148 aa)). The region spanning 649–782 (RLEHVDFECL…LQAALVQILE (134 aa)) is the cDENN domain. The dDENN domain occupies 784 to 874 (RDEVLAQEQQ…QDRELRQSGV (91 aa)).

In terms of biological role, guanine nucleotide exchange factor (GEF) which may activate RAB9A and RAB9B. Promotes the exchange of GDP to GTP, converting inactive GDP-bound Rab proteins into their active GTP-bound form. In Mus musculus (Mouse), this protein is DENN domain-containing protein 2C (Dennd2c).